The primary structure comprises 579 residues: Glutamate--tRNA ligase (579 aa).

Residues 114 to 124 (PNPNGPWHIGH) carry the 'HIGH' region motif.

It belongs to the class-I aminoacyl-tRNA synthetase family. Glutamate--tRNA ligase type 2 subfamily.

The protein resides in the cytoplasm. It carries out the reaction tRNA(Glu) + L-glutamate + ATP = L-glutamyl-tRNA(Glu) + AMP + diphosphate. In terms of biological role, catalyzes the attachment of glutamate to tRNA(Glu) in a two-step reaction: glutamate is first activated by ATP to form Glu-AMP and then transferred to the acceptor end of tRNA(Glu). The sequence is that of Glutamate--tRNA ligase from Haloarcula marismortui (strain ATCC 43049 / DSM 3752 / JCM 8966 / VKM B-1809) (Halobacterium marismortui).